A 214-amino-acid chain; its full sequence is Probable nicotinate-nucleotide adenylyltransferase (214 aa).

It belongs to the NadD family.

The catalysed reaction is nicotinate beta-D-ribonucleotide + ATP + H(+) = deamido-NAD(+) + diphosphate. The protein operates within cofactor biosynthesis; NAD(+) biosynthesis; deamido-NAD(+) from nicotinate D-ribonucleotide: step 1/1. Catalyzes the reversible adenylation of nicotinate mononucleotide (NaMN) to nicotinic acid adenine dinucleotide (NaAD). This is Probable nicotinate-nucleotide adenylyltransferase from Aeromonas salmonicida (strain A449).